The chain runs to 235 residues: Transmembrane emp24 domain-containing protein 9 (235 aa).

Residues 1–37 form the signal peptide; it reads MAVELGVLLVRPRPGTGLGRVMRTLLLVLWLATRGSA. Topologically, residues 38–202 are lumenal; it reads LYFHIGETEK…RQTSESTNQR (165 aa). In terms of domain architecture, GOLD spans 47-145; that stretch reads KKCFIEEIPD…MLRVHLDIQV (99 aa). The segment at 121-160 is required for interaction with STX17; the sequence is CLHSNSTKFSLFAGGMLRVHLDIQVGEHANDYAEIAAKDK. N-linked (GlcNAc...) asparagine glycosylation is present at asparagine 125. Residues 154-184 are a coiled coil; it reads EIAAKDKLSELQLRVRQLVEQVEQIQKEQNY. The residue at position 160 (lysine 160) is an N6-acetyllysine. The helical transmembrane segment at 203-222 threads the bilayer; the sequence is VLWWSILQTLILVAIGVWQM. Residues 223-235 lie on the Cytoplasmic side of the membrane; the sequence is RHLKSFFEAKKLV. Positions 228–229 match the COPII vesicle coat-binding motif; sequence FF. Positions 228 to 235 match the COPI vesicle coat-binding motif; that stretch reads FFEAKKLV.

Belongs to the EMP24/GP25L family. As to quaternary structure, monomer and homodimer in endoplasmic reticulum. Predominantly monomeric and to lesser extent homodimeric in endoplasmic reticulum-Golgi intermediate compartment and cis-Golgi network. Probably oligomerizes with other members of the EMP24/GP25L family such as TMED2, TMED7 and TMED10. Interacts with TMED5. Interacts (via C-terminus) with COPG1; the interaction involves dimeric TMED9. Interacts with PTPN2 and SPAST. Interacts with STX17; the interaction is direct. In terms of processing, N-linked glycosylated containing high mannose.

It is found in the endoplasmic reticulum membrane. Its subcellular location is the golgi apparatus. The protein resides in the cis-Golgi network membrane. The protein localises to the endoplasmic reticulum-Golgi intermediate compartment membrane. It localises to the trans-Golgi network membrane. In terms of biological role, appears to be involved in vesicular protein trafficking, mainly in the early secretory pathway. In COPI vesicle-mediated retrograde transport involved in the coatomer recruitment to membranes of the early secretory pathway. Increases coatomer-dependent activity of ARFGAP2. Thought to play a crucial role in the specific retention of p24 complexes in cis-Golgi membranes; specifically contributes to the coupled localization of TMED2 and TMED10 in the cis-Golgi network. May be involved in organization of intracellular membranes, such as of the ER-Golgi intermediate compartment and the Golgi apparatus. Involved in ER localization of PTPN2 isoform PTPB. The sequence is that of Transmembrane emp24 domain-containing protein 9 (TMED9) from Homo sapiens (Human).